A 704-amino-acid chain; its full sequence is Polyribonucleotide nucleotidyltransferase (704 aa).

Mg(2+)-binding residues include D485 and D491. In terms of domain architecture, KH spans 552 to 611 (PKTETIQIDPDKIRSVIGAGGKVINKIIQDTGVKIDIKEDGSVFVSSSDHAGVKEAIKII). Residues 621-689 (GEIYLGKVTK…SQGRINLSRK (69 aa)) form the S1 motif domain.

It belongs to the polyribonucleotide nucleotidyltransferase family. Mg(2+) serves as cofactor.

The protein localises to the cytoplasm. It catalyses the reaction RNA(n+1) + phosphate = RNA(n) + a ribonucleoside 5'-diphosphate. In terms of biological role, involved in mRNA degradation. Catalyzes the phosphorolysis of single-stranded polyribonucleotides processively in the 3'- to 5'-direction. This Clostridium botulinum (strain Eklund 17B / Type B) protein is Polyribonucleotide nucleotidyltransferase.